The sequence spans 345 residues: 3-hydroxy-5-methyl-1-naphthoate 3-O-methyltransferase (345 aa).

Asp-205 is a binding site for S-adenosyl-L-methionine. His-252 functions as the Proton acceptor in the catalytic mechanism.

The protein belongs to the class I-like SAM-binding methyltransferase superfamily. Cation-independent O-methyltransferase family.

The enzyme catalyses 3-hydroxy-5-methyl-1-naphthoate + S-adenosyl-L-methionine = 3-methoxy-5-methyl-1-naphthoate + S-adenosyl-L-homocysteine + H(+). It participates in antibiotic biosynthesis. Inhibited by different divalent cations, such as Mg(2+), Mn(2+), Fe(2+), Cu(2+) and Zn(2+). O-methyltransferase that mediates the formation of 3-methoxy-5-methyl-1-naphthoate from 3-hydroxy-5-methyl-1-naphthoate in the biosynthesis of the antitumor antibiotic azinomycin B. This chain is 3-hydroxy-5-methyl-1-naphthoate 3-O-methyltransferase, found in Streptomyces sahachiroi.